A 408-amino-acid chain; its full sequence is Sprouty-related, EVH1 domain-containing protein 3 (408 aa).

The region spanning 1–113 is the WH1 domain; sequence MVRVRAVVMA…KSLLAALAAL (113 aa). Residues 118–226 form a disordered region; sequence LTPSSSSSSS…YEDYRRSGPP (109 aa). Low complexity predominate over residues 120 to 130; sequence PSSSSSSSSPS. The KBD domain occupies 192–242; sequence LPFTGIPEPSESLAGAGSQGWGSRGYEDYRRSGPPPPPLALSTCVVRFAKT. An Asymmetric dimethylarginine modification is found at arginine 238. Arginine 246 carries the omega-N-methylarginine modification. Positions 256–286 are disordered; the sequence is LPAPLTEAAPPAPPARPPPGPGPTPAPAKAS. Pro residues predominate over residues 265-281; that stretch reads PPAPPARPPPGPGPTPA. One can recognise an SPR domain in the interval 294 to 405; sequence RCVHCRALFR…CAGCGGRHEE (112 aa).

As to quaternary structure, interacts with palmitoyltransferase ZDHHC17/HIP14; the interaction leads to palmitoylation of SPRED3. Phosphorylated on tyrosine. In terms of processing, palmitoylated by ZDHHC17/HIP14. Post-translationally, ubiquitinated. In terms of tissue distribution, brain specific.

It is found in the cell membrane. Tyrosine kinase substrate that inhibits growth-factor-mediated activation of MAP kinase. Inhibits fibroblast growth factor (FGF)-induced retinal lens fiber differentiation, probably by inhibiting FGF-mediated phosphorylation of ERK1/2. Inhibits TGFB-induced epithelial-to-mesenchymal transition in lens epithelial cells. The polypeptide is Sprouty-related, EVH1 domain-containing protein 3 (Spred3) (Mus musculus (Mouse)).